We begin with the raw amino-acid sequence, 448 residues long: Pre-mRNA-splicing factor SAD1 (448 aa).

Met-1 is subject to N-acetylmethionine. The UBP-type; degenerate zinc finger occupies 27-124 (PNYAYLETVV…NSIKFAAYPT (98 aa)). Cys-60, Cys-63, His-79, and His-85 together coordinate Zn(2+). The 298-residue stretch at 150-447 (IGFTNAATYD…ETFIQVWEKQ (298 aa)) folds into the USP domain.

As to quaternary structure, component of the 45S U1.U2.U4/U6.U5 penta-snRNP particle, a subcomplex of the spliceosome.

The protein localises to the nucleus. Functionally, promotes the assembly of newly synthesized U4 snRNA into the U4/U6 snRNP particle. Required for splicing of pre-mRNA. The polypeptide is Pre-mRNA-splicing factor SAD1 (SAD1) (Saccharomyces cerevisiae (strain ATCC 204508 / S288c) (Baker's yeast)).